The sequence spans 250 residues: Pyrroloquinoline-quinone synthase (250 aa).

The protein belongs to the PqqC family.

It catalyses the reaction 6-(2-amino-2-carboxyethyl)-7,8-dioxo-1,2,3,4,7,8-hexahydroquinoline-2,4-dicarboxylate + 3 O2 = pyrroloquinoline quinone + 2 H2O2 + 2 H2O + H(+). It participates in cofactor biosynthesis; pyrroloquinoline quinone biosynthesis. In terms of biological role, ring cyclization and eight-electron oxidation of 3a-(2-amino-2-carboxyethyl)-4,5-dioxo-4,5,6,7,8,9-hexahydroquinoline-7,9-dicarboxylic-acid to PQQ. The chain is Pyrroloquinoline-quinone synthase from Xanthomonas euvesicatoria pv. vesicatoria (strain 85-10) (Xanthomonas campestris pv. vesicatoria).